We begin with the raw amino-acid sequence, 329 residues long: Cathepsin K (329 aa).

The first 15 residues, 1 to 15 (MWVFKFLLLPMVSFA), serve as a signal peptide directing secretion. Residues 16–114 (LSPEEMLDTQ…TLYTPEWEGR (99 aa)) constitute a propeptide, activation peptide. N-linked (GlcNAc...) asparagine glycosylation is present at Asn103. 2 disulfides stabilise this stretch: Cys136–Cys177 and Cys170–Cys210. Cys139 is an active-site residue. The N-linked (GlcNAc...) asparagine glycan is linked to Asn213. Cys269 and Cys318 are disulfide-bonded. Active-site residues include His276 and Asn296.

Belongs to the peptidase C1 family. In terms of tissue distribution, predominantly expressed in bones. Expressed in thyroid epithelial cells.

It localises to the lysosome. The protein resides in the secreted. Its subcellular location is the apical cell membrane. The catalysed reaction is Broad proteolytic activity. With small-molecule substrates and inhibitors, the major determinant of specificity is P2, which is preferably Leu, Met &gt; Phe, and not Arg.. Thiol protease involved in osteoclastic bone resorption. Displays potent endoprotease activity against fibrinogen at acid pH. May play an important role in extracellular matrix degradation. Involved in the release of thyroid hormone thyroxine (T4) by limited proteolysis of TG/thyroglobulin in the thyroid follicle lumen. In Mus musculus (Mouse), this protein is Cathepsin K (Ctsk).